Here is a 333-residue protein sequence, read N- to C-terminus: Glycerol-3-phosphate dehydrogenase [NAD(P)+] (333 aa).

NADPH-binding residues include Ser-10, Trp-11, His-31, Arg-32, and Lys-105. Positions 105, 136, and 138 each coordinate sn-glycerol 3-phosphate. Ala-140 lines the NADPH pocket. Residues Lys-191, Asp-244, Ser-254, Arg-255, and Asn-256 each contribute to the sn-glycerol 3-phosphate site. Lys-191 acts as the Proton acceptor in catalysis. Arg-255 contributes to the NADPH binding site. NADPH contacts are provided by Ile-279 and Glu-281.

The protein belongs to the NAD-dependent glycerol-3-phosphate dehydrogenase family.

It is found in the cytoplasm. It catalyses the reaction sn-glycerol 3-phosphate + NAD(+) = dihydroxyacetone phosphate + NADH + H(+). It carries out the reaction sn-glycerol 3-phosphate + NADP(+) = dihydroxyacetone phosphate + NADPH + H(+). It participates in membrane lipid metabolism; glycerophospholipid metabolism. In terms of biological role, catalyzes the reduction of the glycolytic intermediate dihydroxyacetone phosphate (DHAP) to sn-glycerol 3-phosphate (G3P), the key precursor for phospholipid synthesis. The chain is Glycerol-3-phosphate dehydrogenase [NAD(P)+] from Pelodictyon phaeoclathratiforme (strain DSM 5477 / BU-1).